Here is a 202-residue protein sequence, read N- to C-terminus: uncharacterized protein (202 aa).

The protein resides in the mitochondrion. This is an uncharacterized protein from Schizosaccharomyces pombe (strain 972 / ATCC 24843) (Fission yeast).